The following is a 196-amino-acid chain: Guanylate kinase (196 aa).

Positions 8–189 (GKIIIISGPS…AADKLRHILY (182 aa)) constitute a Guanylate kinase-like domain. Position 15 to 22 (15 to 22 (GPSGVGKK)) interacts with ATP.

It belongs to the guanylate kinase family.

Its subcellular location is the cytoplasm. It carries out the reaction GMP + ATP = GDP + ADP. Its function is as follows. Essential for recycling GMP and indirectly, cGMP. This Malacoplasma penetrans (strain HF-2) (Mycoplasma penetrans) protein is Guanylate kinase.